Here is a 310-residue protein sequence, read N- to C-terminus: HPr kinase/phosphorylase (310 aa).

Active-site residues include histidine 138 and lysine 159. Residue 153–160 coordinates ATP; that stretch reads GDSGIGKS. Serine 160 provides a ligand contact to Mg(2+). The active-site Proton acceptor; for phosphorylation activity. Proton donor; for dephosphorylation activity is the aspartate 177. The tract at residues 201 to 210 is important for the catalytic mechanism of both phosphorylation and dephosphorylation; the sequence is LEIRGVGIID. Mg(2+) is bound at residue glutamate 202. Arginine 243 is a catalytic residue. The segment at 264–269 is important for the catalytic mechanism of dephosphorylation; sequence PVKTGR.

Belongs to the HPrK/P family. Homohexamer. The cofactor is Mg(2+).

The catalysed reaction is [HPr protein]-L-serine + ATP = [HPr protein]-O-phospho-L-serine + ADP + H(+). It carries out the reaction [HPr protein]-O-phospho-L-serine + phosphate + H(+) = [HPr protein]-L-serine + diphosphate. Functionally, catalyzes the ATP- as well as the pyrophosphate-dependent phosphorylation of a specific serine residue in HPr, a phosphocarrier protein of the phosphoenolpyruvate-dependent sugar phosphotransferase system (PTS). HprK/P also catalyzes the pyrophosphate-producing, inorganic phosphate-dependent dephosphorylation (phosphorolysis) of seryl-phosphorylated HPr (P-Ser-HPr). The two antagonistic activities of HprK/P are regulated by several intracellular metabolites, which change their concentration in response to the absence or presence of rapidly metabolisable carbon sources (glucose, fructose, etc.) in the growth medium. Therefore, by controlling the phosphorylation state of HPr, HPrK/P is a sensor enzyme that plays a major role in the regulation of carbon metabolism and sugar transport: it mediates carbon catabolite repression (CCR), and regulates PTS-catalyzed carbohydrate uptake and inducer exclusion. In Streptococcus pyogenes serotype M3 (strain ATCC BAA-595 / MGAS315), this protein is HPr kinase/phosphorylase (hprK).